The chain runs to 318 residues: MFFINIISLIIPILLAVAFLTLVERKVLGYMQLRKGPNIVGPYGLLQPIADAVKLFTKEPLRPLTSSMSMFILAPILALSLALTMWIPLPMPYPLINMNLGVLFMLAMSSLAVYSILWSGWASNSKYALIGALRAVAQTISYEVTLAIILLSVLLMNGSFTLSTLIITQEHMWLIFPAWPLAMMWFISTLAETNRAPFDLTEGESELVSGFNVEYAAGPFALFFLAEYANIIMMNILTTILFFGAFHNPFMPELYSINFTMKTLLLTICFLWIRASYPRFRYDQLMHLLWKNFLPLTLALCMWHVALPIITASIPPQT.

Helical transmembrane passes span 2–22 (FFIN…FLTL), 70–90 (MFIL…IPLP), 100–120 (LGVL…LWSG), 147–167 (AIIL…TLII), 171–191 (HMWL…STLA), 223–243 (FFLA…ILFF), 253–273 (ELYS…FLWI), and 294–314 (LPLT…TASI).

This sequence belongs to the complex I subunit 1 family. In terms of assembly, core subunit of respiratory chain NADH dehydrogenase (Complex I) which is composed of 45 different subunits.

The protein localises to the mitochondrion inner membrane. It catalyses the reaction a ubiquinone + NADH + 5 H(+)(in) = a ubiquinol + NAD(+) + 4 H(+)(out). Core subunit of the mitochondrial membrane respiratory chain NADH dehydrogenase (Complex I) which catalyzes electron transfer from NADH through the respiratory chain, using ubiquinone as an electron acceptor. Essential for the catalytic activity and assembly of complex I. The chain is NADH-ubiquinone oxidoreductase chain 1 (MT-ND1) from Canis lupus familiaris (Dog).